The primary structure comprises 303 residues: Eukaryotic translation initiation factor 3 subunit G (303 aa).

Disordered stretches follow at residues 1–32 (MAAV…QTIV), 81–100 (GLSA…VGEN), 105–126 (PSAN…NAMK), and 181–215 (GAAG…AGGK). Residues 109–126 (WRKDQKDESKDANANAMK) are compositionally biased toward basic and acidic residues. Positions 223-301 (ATLRVTNVSE…LILRVEFAKK (79 aa)) constitute an RRM domain.

This sequence belongs to the eIF-3 subunit G family. Component of the eukaryotic translation initiation factor 3 (eIF-3) complex.

It is found in the cytoplasm. Its function is as follows. RNA-binding component of the eukaryotic translation initiation factor 3 (eIF-3) complex, which is involved in protein synthesis of a specialized repertoire of mRNAs and, together with other initiation factors, stimulates binding of mRNA and methionyl-tRNAi to the 40S ribosome. The eIF-3 complex specifically targets and initiates translation of a subset of mRNAs involved in cell proliferation. This subunit can bind 18S rRNA. In Pyricularia oryzae (strain 70-15 / ATCC MYA-4617 / FGSC 8958) (Rice blast fungus), this protein is Eukaryotic translation initiation factor 3 subunit G.